A 398-amino-acid polypeptide reads, in one-letter code: 2-epi-5-epi-valiolone synthase (398 aa).

NAD(+) is bound by residues Asp62, 93–96 (ETVK), 126–130 (GVLMD), 150–151 (TT), Lys163, Lys172, and 190–193 (FLAT). Lys163 is a catalytic residue. A divalent metal cation is bound by residues Glu205, His276, and His292.

The protein belongs to the sugar phosphate cyclases superfamily. EEVS family. It depends on NAD(+) as a cofactor. Requires Co(2+) as cofactor.

The catalysed reaction is D-sedoheptulose 7-phosphate = 2-epi-5-epi-valiolone + phosphate. Its function is as follows. Catalyzes the cyclization of D-sedoheptulose 7-phosphate to 2-epi-5-epi-valiolone. Does not use ido-heptulose 7-phosphate and 3-deoxy-arabino-heptulosonate 7-phosphate. Involved in the biosynthesis of the acarviose moiety of the alpha-glucosidase inhibitor acarbose. This chain is 2-epi-5-epi-valiolone synthase, found in Actinoplanes sp. (strain ATCC 31044 / CBS 674.73 / SE50/110).